The chain runs to 201 residues: Proteasome subunit beta type-2 (201 aa).

An N-acetylmethionine modification is found at M1.

It belongs to the peptidase T1B family. As to quaternary structure, the 26S proteasome consists of a 20S proteasome core and two 19S regulatory subunits. The 20S proteasome core is a barrel-shaped complex made of 28 subunits that are arranged in four stacked rings. The two outer rings are each formed by seven alpha subunits, and the two inner rings are formed by seven beta subunits. The proteolytic activity is exerted by three beta-subunits PSMB5, PSMB6 and PSMB7. (Microbial infection) Interacts with HIV-1 protein Tat.

It localises to the cytoplasm. The protein localises to the nucleus. Functionally, non-catalytic component of the 20S core proteasome complex involved in the proteolytic degradation of most intracellular proteins. This complex plays numerous essential roles within the cell by associating with different regulatory particles. Associated with two 19S regulatory particles, forms the 26S proteasome and thus participates in the ATP-dependent degradation of ubiquitinated proteins. The 26S proteasome plays a key role in the maintenance of protein homeostasis by removing misfolded or damaged proteins that could impair cellular functions, and by removing proteins whose functions are no longer required. Associated with the PA200 or PA28, the 20S proteasome mediates ubiquitin-independent protein degradation. This type of proteolysis is required in several pathways including spermatogenesis (20S-PA200 complex) or generation of a subset of MHC class I-presented antigenic peptides (20S-PA28 complex). The polypeptide is Proteasome subunit beta type-2 (Homo sapiens (Human)).